We begin with the raw amino-acid sequence, 196 residues long: Putative 3-methyladenine DNA glycosylase (196 aa).

It belongs to the DNA glycosylase MPG family.

This is Putative 3-methyladenine DNA glycosylase (yxlJ) from Bacillus subtilis (strain 168).